A 646-amino-acid polypeptide reads, in one-letter code: Lipoteichoic acid synthase (646 aa).

Residues 1–7 (MSLPKKK) lie on the Cytoplasmic side of the membrane. Residues 8–28 (IGIFAFFLLTVFTITLKTYFS) form a helical membrane-spanning segment. At 29–43 (YYVDFSLGVKGLVQN) the chain is on the extracellular side. A helical transmembrane segment spans residues 44–64 (LILLMNPYSLIALVLSVFLFF). Over 65 to 68 (KGKK) the chain is Cytoplasmic. Residues 69 to 89 (AFWFIFIGGFLLTFLLYANVV) traverse the membrane as a helical segment. Residues 90–119 (YFRFFSDFLTFSTLNQAGNVESMGGAVSAS) are Extracellular-facing. A helical transmembrane segment spans residues 120 to 140 (FKWYDFVYFIDTIIYLAILIF). The Cytoplasmic segment spans residues 141–153 (KRKWLDNRAFSKK). A helical membrane pass occupies residues 154–174 (FVPVVMATSVALFFLNLAFAE). Topologically, residues 175 to 646 (TDRPELLTRT…KSGPKGNEKK (472 aa)) are extracellular. Residues E255 and T300 each contribute to the Mn(2+) site. Residue T300 is part of the active site. H416 contacts substrate. Mn(2+) contacts are provided by D475 and H476.

It belongs to the LTA synthase family. In terms of processing, proteolytically cleaved.

The protein resides in the cell membrane. Its subcellular location is the secreted. It participates in cell wall biogenesis; lipoteichoic acid biosynthesis. In terms of biological role, catalyzes the polymerization of lipoteichoic acid (LTA) polyglycerol phosphate, a reaction that presumably uses phosphatidylglycerol (PG) as substrate. Is required for staphylococcal growth and cell division process. The chain is Lipoteichoic acid synthase (ltaS) from Staphylococcus epidermidis (strain ATCC 35984 / DSM 28319 / BCRC 17069 / CCUG 31568 / BM 3577 / RP62A).